The sequence spans 146 residues: Hemoglobin subunit beta (146 aa).

V1 bears the N-acetylvaline mark. One can recognise a Globin domain in the interval 2–146; that stretch reads HLTADEKAAV…VATALAHKYH (145 aa). T12 bears the Phosphothreonine mark. At S44 the chain carries Phosphoserine. At K59 the chain carries N6-acetyllysine. Heme b is bound at residue H63. Position 82 is an N6-acetyllysine (K82). H92 is a heme b binding site. C93 is subject to S-nitrosocysteine. Position 144 is an N6-acetyllysine (K144).

It belongs to the globin family. In terms of assembly, heterotetramer of two alpha chains and two beta chains. As to expression, red blood cells.

Functionally, involved in oxygen transport from the lung to the various peripheral tissues. This chain is Hemoglobin subunit beta (HBB), found in Taphozous georgianus (Sharp-nosed tomb bat).